Consider the following 309-residue polypeptide: General transcription factor IIH subunit 3 (309 aa).

The C4-type zinc finger occupies 269 to 286 (CSVCLSIFCNFSPICTTC).

The protein belongs to the TFB4 family. In terms of assembly, part of a TFIID-containing RNA polymerase II pre-initiation complex that is composed of TBP and at least GTF2A1, GTF2A2, GTF2E1, GTF2E2, GTF2F1, GTF2H2, GTF2H3, GTF2H4, GTF2H5, GTF2B, TCEA1, ERCC2, ERCC3, TAF1, TAF2, TAF3, TAF4, TAF5, TAF6, TAF7, TAF8, TAF9, TAF10, TAF11, TAF12 and TAF13. Component of the 7-subunit TFIIH core complex composed of XPB/ERCC3, XPD/ERCC2, GTF2H1, GTF2H2, GTF2H3, GTF2H4 and GTF2H5, which is active in NER. The core complex associates with the 3-subunit CDK-activating kinase (CAK) module composed of CCNH/cyclin H, CDK7 and MNAT1 to form the 10-subunit holoenzyme (holo-TFIIH) active in transcription. Interacts with RARA; the interaction requires prior phosphorylation of RARA on 'Ser-369' which then enhances interaction of RARA with CDK7.

It localises to the nucleus. In terms of biological role, component of the general transcription and DNA repair factor IIH (TFIIH) core complex, which is involved in general and transcription-coupled nucleotide excision repair (NER) of damaged DNA and, when complexed to CAK, in RNA transcription by RNA polymerase II. In NER, TFIIH acts by opening DNA around the lesion to allow the excision of the damaged oligonucleotide and its replacement by a new DNA fragment. In transcription, TFIIH has an essential role in transcription initiation. When the pre-initiation complex (PIC) has been established, TFIIH is required for promoter opening and promoter escape. Phosphorylation of the C-terminal tail (CTD) of the largest subunit of RNA polymerase II by the kinase module CAK controls the initiation of transcription. The chain is General transcription factor IIH subunit 3 (GTF2H3) from Bos taurus (Bovine).